The primary structure comprises 338 residues: Glycerol-3-phosphate dehydrogenase [NAD(P)+] (338 aa).

NADPH is bound by residues Ser-13, Trp-14, and Lys-108. Sn-glycerol 3-phosphate is bound by residues Lys-108, Gly-139, and Ser-141. Ala-143 is a binding site for NADPH. Positions 194, 247, 257, 258, and 259 each coordinate sn-glycerol 3-phosphate. The active-site Proton acceptor is Lys-194. Arg-258 contacts NADPH. Residues Val-282 and Glu-284 each contribute to the NADPH site.

Belongs to the NAD-dependent glycerol-3-phosphate dehydrogenase family.

Its subcellular location is the cytoplasm. The enzyme catalyses sn-glycerol 3-phosphate + NAD(+) = dihydroxyacetone phosphate + NADH + H(+). It carries out the reaction sn-glycerol 3-phosphate + NADP(+) = dihydroxyacetone phosphate + NADPH + H(+). The protein operates within membrane lipid metabolism; glycerophospholipid metabolism. Its function is as follows. Catalyzes the reduction of the glycolytic intermediate dihydroxyacetone phosphate (DHAP) to sn-glycerol 3-phosphate (G3P), the key precursor for phospholipid synthesis. This chain is Glycerol-3-phosphate dehydrogenase [NAD(P)+], found in Streptococcus pneumoniae serotype 19F (strain G54).